The primary structure comprises 521 residues: Membrane-bound transcription factor site-2 protease (521 aa).

Residues 1-3 (MIP) lie on the Cytoplasmic side of the membrane. A helical membrane pass occupies residues 4 to 24 (VSLVVVVVGGWTVVYLTDLVL). Topologically, residues 25-74 (KSSVYFKHSYEDWLESNGLSISPFHIRWQTAVFNRAFYSWGRRKARMLYQ) are lumenal. A run of 2 helical transmembrane segments spans residues 75–95 (WFNFGMVFGVIAMFSSFFLLG) and 96–107 (KTLMQTLAQMMA). Residues 108–146 (DSPSSYSSSSSSSSSSSSSSSSSSSSSSSSSLHNEQVLQ) lie on the Lumenal side of the membrane. A disordered region spans residues 113 to 137 (YSSSSSSSSSSSSSSSSSSSSSSSS). The helical transmembrane segment at 147–171 (VVVPGINLPVNQLTYFFAAVLISGV) threads the bilayer. Residue His-173 participates in Zn(2+) binding. Residue Glu-174 is part of the active site. 3 helical membrane-spanning segments follow: residues 176 to 188 (GHGIAAIREQVRF), 189 to 211 (NGFGIFLFIIYPGAFVDLFTTHL), and 231 to 253 (FVLALLGILALVLLPVILLPFYY). His-177 is a binding site for Zn(2+). Residues 254-448 (TGVGVLITEV…LPVVVETFVK (195 aa)) are Lumenal-facing. N-linked (GlcNAc...) asparagine glycosylation occurs at Asn-339. 2 helical membrane passes run 449 to 466 (YLISLSGALAIVNAVPCF) and 467 to 478 (ALDGQWILNSFL). Over 479–494 (DATLTSVIGDNDVKDL) the chain is Lumenal. A helical membrane pass occupies residues 495-515 (IGFFILLGGSVLLAANVTLGL). The Cytoplasmic portion of the chain corresponds to 516-521 (WMVTAR).

This sequence belongs to the peptidase M50A family. The cofactor is Zn(2+).

The protein localises to the membrane. It localises to the cytoplasm. It is found in the golgi apparatus membrane. It catalyses the reaction Cleaves several transcription factors that are type-2 transmembrane proteins within membrane-spanning domains. Known substrates include sterol regulatory element-binding protein (SREBP) -1, SREBP-2 and forms of the transcriptional activator ATF6. SREBP-2 is cleaved at the site 477-DRSRILL-|-CVLTFLCLSFNPLTSLLQWGGA-505. The residues Asn-Pro, 11 residues distal to the site of cleavage in the membrane-spanning domain, are important for cleavage by S2P endopeptidase. Replacement of either of these residues does not prevent cleavage, but there is no cleavage if both of these residues are replaced.. Zinc metalloprotease that mediates intramembrane proteolysis of proteins such as ATF6, ATF6B, SREBF1/SREBP1 and SREBF2/SREBP2. Catalyzes the second step in the proteolytic activation of the sterol regulatory element-binding proteins (SREBPs) SREBF1/SREBP1 and SREBF2/SREBP2: cleaves SREBPs within the first transmembrane segment, thereby releasing the N-terminal segment with a portion of the transmembrane segment attached. Mature N-terminal SREBP fragments shuttle to the nucleus and activate gene transcription. Also mediates the second step in the proteolytic activation of the cyclic AMP-dependent transcription factor ATF-6 (ATF6 and ATF6B). Involved in intramembrane proteolysis during bone formation. In astrocytes and osteoblasts, upon DNA damage and ER stress, mediates the second step of the regulated intramembrane proteolytic activation of the transcription factor CREB3L1, leading to the inhibition of cell-cycle progression. The protein is Membrane-bound transcription factor site-2 protease (MBTPS2) of Pongo abelii (Sumatran orangutan).